Here is a 650-residue protein sequence, read N- to C-terminus: Exonuclease 3'-5' domain-containing protein 2 (650 aa).

The Mitochondrial intermembrane segment spans residues 1 to 6; the sequence is MSRQNL. Residues 7–29 traverse the membrane as a helical segment; it reads VALTVTTLLGVAMGGFVLWKGIQ. At 30–650 the chain is on the cytoplasmic side; sequence RRWSKTSRVM…YGDDLPIKLS (621 aa). Residues 34–89 form a disordered region; the sequence is KTSRVMQQQPQQPQQPQQPQPQPQPQPQPQPEHPQPQQQVPGGREWPPPEDDQLPF. The span at 49-67 shows a compositional bias: pro residues; the sequence is PQQPQPQPQPQPQPQPEHP. Residues Asp-137, Glu-139, and Asp-275 each contribute to the a divalent metal cation site. One can recognise a 3'-5' exonuclease domain in the interval 184 to 276; that stretch reads ILADGAILKV…DQVTYAARDA (93 aa). The interval 340 to 373 is disordered; the sequence is SQLKPRNRKAKTDRMVPGNNQGRDPRKHKRKPLG.

This sequence belongs to the EXD2 family. As to quaternary structure, homodimer. Interacts with RBBP8, MRE11 and BRCA1. The cofactor is Mg(2+). Requires Mn(2+) as cofactor.

The protein localises to the mitochondrion outer membrane. It localises to the mitochondrion matrix. Its subcellular location is the nucleus. The protein resides in the chromosome. It catalyses the reaction Exonucleolytic cleavage in the 3'- to 5'-direction to yield nucleoside 5'-phosphates.. In terms of biological role, exonuclease that has both 3'-5' exoribonuclease and exodeoxyribonuclease activities, depending on the divalent metal cation used as cofactor. In presence of Mg(2+), only shows 3'-5' exoribonuclease activity, while it shows both exoribonuclease and exodeoxyribonuclease activities in presence of Mn(2+). Acts as an exoribonuclease in mitochondrion, possibly by regulating ATP production and mitochondrial translation. Also involved in the response to DNA damage. Acts as 3'-5' exodeoxyribonuclease for double-strand breaks resection and efficient homologous recombination. Plays a key role in controlling the initial steps of chromosomal break repair, it is recruited to chromatin in a damage-dependent manner and functionally interacts with the MRN complex to accelerate resection through its 3'-5' exonuclease activity, which efficiently processes double-stranded DNA substrates containing nicks. Also involved in response to replicative stress: recruited to stalled forks and is required to stabilize and restart stalled replication forks by restraining excessive fork regression, thereby suppressing their degradation. This is Exonuclease 3'-5' domain-containing protein 2 from Mus musculus (Mouse).